Reading from the N-terminus, the 1272-residue chain is CST complex subunit CTC1 (1272 aa).

The protein belongs to the CTC1 family. Component of the CST complex, composed of CTC1, TEN1 and STN1. Interacts with POT1A.

The protein localises to the nucleus. Its subcellular location is the chromosome. It localises to the telomere. Component of the CST complex, a complex that binds to single-stranded DNA and is required to protect telomeres from DNA degradation. The CST complex binds single-stranded DNA with high affinity in a sequence-independent manner, while isolated subunits bind DNA with low affinity by themselves. Associates with enzymatically active telomerase. In Arabidopsis thaliana (Mouse-ear cress), this protein is CST complex subunit CTC1.